A 290-amino-acid chain; its full sequence is Ribosomal RNA small subunit methyltransferase A (290 aa).

His37, Val39, Gly64, Glu85, Asp115, and Asn132 together coordinate S-adenosyl-L-methionine.

This sequence belongs to the class I-like SAM-binding methyltransferase superfamily. rRNA adenine N(6)-methyltransferase family. RsmA subfamily.

The protein localises to the cytoplasm. The enzyme catalyses adenosine(1518)/adenosine(1519) in 16S rRNA + 4 S-adenosyl-L-methionine = N(6)-dimethyladenosine(1518)/N(6)-dimethyladenosine(1519) in 16S rRNA + 4 S-adenosyl-L-homocysteine + 4 H(+). Its function is as follows. Specifically dimethylates two adjacent adenosines (A1518 and A1519) in the loop of a conserved hairpin near the 3'-end of 16S rRNA in the 30S particle. May play a critical role in biogenesis of 30S subunits. This Acidothermus cellulolyticus (strain ATCC 43068 / DSM 8971 / 11B) protein is Ribosomal RNA small subunit methyltransferase A.